We begin with the raw amino-acid sequence, 586 residues long: MVTHRQRYREKVSQMVSWGHWFALFNILLSLVIGSRYLFIADWPTTLAGRIYSYVSIIGHFSFLVFATYLLILFPLTFIVGSQRLMRFLSVILATAGMTLLLIDSEVFTRFHLHLNPIVWQLVINPDENEMARDWQLMFISVPVILLLELVFATWSWQKLRSLTRRRRFARPLAAFLFIAFIASHVVYIWADANFYRPITMQRANLPLSYPMTARRFLEKHGLLDAQEYQRRLIEQGNPDAVSVQYPLSELRYRDMGTGQNVLLITVDGLNYSRFEKQMPALAGFAEQNISFTRHMSSGNTTDNGIFGLFYGISPSYMDGILSTRTPAALITALNQQGYQLGLFSSDGFTSPLYRQALLSDFSMPSVRTQSDEQTATQWINWLGRYAQEDNRWFSWVSFNGTNIDDSNQQAFARKYSRAAGNVDDQINRVLNALRDSGKLDNTVVIITAGRGIPLSEEEETFDWSHGHLQVPLVIHWPGTPAQRINALTDHTDLMTTLMQRLLHVSTPASEYSQGQDLFNPQRRHYWVTAADNDTLAITTPKKTLVLNNNGKYRTYNLRGERVKDEKPQLSLLLQVLTDEKRFIAN.

The Cytoplasmic portion of the chain corresponds to 1–20; that stretch reads MVTHRQRYREKVSQMVSWGH. Residues 21-43 form a helical membrane-spanning segment; the sequence is WFALFNILLSLVIGSRYLFIADW. At 44 to 57 the chain is on the periplasmic side; that stretch reads PTTLAGRIYSYVSI. A helical membrane pass occupies residues 58–80; the sequence is IGHFSFLVFATYLLILFPLTFIV. The Cytoplasmic segment spans residues 81 to 84; it reads GSQR. A helical transmembrane segment spans residues 85–103; the sequence is LMRFLSVILATAGMTLLLI. Residues 104–134 are Periplasmic-facing; that stretch reads DSEVFTRFHLHLNPIVWQLVINPDENEMARD. The helical transmembrane segment at 135–157 threads the bilayer; sequence WQLMFISVPVILLLELVFATWSW. Residues 158–168 are Cytoplasmic-facing; that stretch reads QKLRSLTRRRR. A helical transmembrane segment spans residues 169-191; the sequence is FARPLAAFLFIAFIASHVVYIWA. The Periplasmic segment spans residues 192–586; sequence DANFYRPITM…LTDEKRFIAN (395 aa).

This sequence to H.influenzae HI_0842.

It is found in the cell inner membrane. The protein is Inner membrane protein YejM (yejM) of Escherichia coli O157:H7.